Reading from the N-terminus, the 227-residue chain is Triosephosphate isomerase (227 aa).

6–8 (NLK) is a substrate binding site. His85 (electrophile) is an active-site residue. Glu152 functions as the Proton acceptor in the catalytic mechanism. Substrate contacts are provided by Gly158 and Ser188.

It belongs to the triosephosphate isomerase family. In terms of assembly, homodimer.

It is found in the cytoplasm. It carries out the reaction D-glyceraldehyde 3-phosphate = dihydroxyacetone phosphate. Its pathway is carbohydrate biosynthesis; gluconeogenesis. It participates in carbohydrate degradation; glycolysis; D-glyceraldehyde 3-phosphate from glycerone phosphate: step 1/1. Functionally, involved in the gluconeogenesis. Catalyzes stereospecifically the conversion of dihydroxyacetone phosphate (DHAP) to D-glyceraldehyde-3-phosphate (G3P). In Campylobacter concisus (strain 13826), this protein is Triosephosphate isomerase.